The primary structure comprises 955 residues: Glycine dehydrogenase (decarboxylating) (955 aa).

Lys-705 carries the N6-(pyridoxal phosphate)lysine modification.

The protein belongs to the GcvP family. As to quaternary structure, the glycine cleavage system is composed of four proteins: P, T, L and H. Pyridoxal 5'-phosphate is required as a cofactor.

The catalysed reaction is N(6)-[(R)-lipoyl]-L-lysyl-[glycine-cleavage complex H protein] + glycine + H(+) = N(6)-[(R)-S(8)-aminomethyldihydrolipoyl]-L-lysyl-[glycine-cleavage complex H protein] + CO2. Functionally, the glycine cleavage system catalyzes the degradation of glycine. The P protein binds the alpha-amino group of glycine through its pyridoxal phosphate cofactor; CO(2) is released and the remaining methylamine moiety is then transferred to the lipoamide cofactor of the H protein. In Aliivibrio fischeri (strain ATCC 700601 / ES114) (Vibrio fischeri), this protein is Glycine dehydrogenase (decarboxylating).